The sequence spans 242 residues: Polycomb group RING finger protein 3 (242 aa).

The RING-type zinc finger occupies 17–56 (CRLCSGYLIDATTVTECLHTFCRSCLVKYLEENNTCPTCR). The segment at 115-149 (AKQHLDSHRNGETKADDSSNKEAAEEKPEEDNDYH) is disordered. Residues 117 to 140 (QHLDSHRNGETKADDSSNKEAAEE) are compositionally biased toward basic and acidic residues. The tract at residues 132–242 (SSNKEAAEEK…LHYRPKMDLL (111 aa)) is interaction with BCORL1.

Component of a PRC1-like complex that contains PCGF3, RNF2 and RYBP. Interacts with CBX6, CBX7 and CBX8. Interacts with BCORL1.

Its subcellular location is the nucleus. It is found in the nucleoplasm. Its function is as follows. Component of a Polycomb group (PcG) multiprotein PRC1-like complex, a complex class required to maintain the transcriptionally repressive state of many genes, including Hox genes, throughout development. PcG PRC1 complex acts via chromatin remodeling and modification of histones; it mediates monoubiquitination of histone H2A 'Lys-119', rendering chromatin heritably changed in its expressibility. Within the PRC1-like complex, regulates RNF2 ubiquitin ligase activity. Plays a redundant role with PCGF5 as part of a PRC1-like complex that mediates monoubiquitination of histone H2A 'Lys-119' on the X chromosome and is required for normal silencing of one copy of the X chromosome in XX females. The polypeptide is Polycomb group RING finger protein 3 (PCGF3) (Homo sapiens (Human)).